Reading from the N-terminus, the 323-residue chain is tRNA U34 carboxymethyltransferase (323 aa).

Carboxy-S-adenosyl-L-methionine contacts are provided by residues Lys91, Trp105, Lys110, Gly130, 152-154, 181-182, Met196, Tyr200, and Arg315; these read DPT and IE.

The protein belongs to the class I-like SAM-binding methyltransferase superfamily. CmoB family. As to quaternary structure, homotetramer.

The catalysed reaction is carboxy-S-adenosyl-L-methionine + 5-hydroxyuridine(34) in tRNA = 5-carboxymethoxyuridine(34) in tRNA + S-adenosyl-L-homocysteine + H(+). Its function is as follows. Catalyzes carboxymethyl transfer from carboxy-S-adenosyl-L-methionine (Cx-SAM) to 5-hydroxyuridine (ho5U) to form 5-carboxymethoxyuridine (cmo5U) at position 34 in tRNAs. This is tRNA U34 carboxymethyltransferase from Cronobacter sakazakii (strain ATCC BAA-894) (Enterobacter sakazakii).